Consider the following 339-residue polypeptide: Dihydroorotase (339 aa).

Residues histidine 12 and histidine 14 each contribute to the Zn(2+) site. Residues 14 to 16 and asparagine 40 contribute to the substrate site; that span reads HVR. The Zn(2+) site is built by lysine 94, histidine 133, histidine 167, and aspartate 239. Lysine 94 is subject to N6-carboxylysine. Residue histidine 133 coordinates substrate. The active site involves aspartate 239. Residues histidine 243 and alanine 255 each contribute to the substrate site.

The protein belongs to the metallo-dependent hydrolases superfamily. DHOase family. Class II DHOase subfamily. As to quaternary structure, homodimer. The cofactor is Zn(2+).

It catalyses the reaction (S)-dihydroorotate + H2O = N-carbamoyl-L-aspartate + H(+). The protein operates within pyrimidine metabolism; UMP biosynthesis via de novo pathway; (S)-dihydroorotate from bicarbonate: step 3/3. Functionally, catalyzes the reversible cyclization of carbamoyl aspartate to dihydroorotate. The protein is Dihydroorotase of Helicobacter pylori (strain ATCC 700392 / 26695) (Campylobacter pylori).